We begin with the raw amino-acid sequence, 466 residues long: 3-isopropylmalate dehydratase large subunit (466 aa).

[4Fe-4S] cluster-binding residues include C347, C407, and C410.

Belongs to the aconitase/IPM isomerase family. LeuC type 1 subfamily. Heterodimer of LeuC and LeuD. It depends on [4Fe-4S] cluster as a cofactor.

It carries out the reaction (2R,3S)-3-isopropylmalate = (2S)-2-isopropylmalate. The protein operates within amino-acid biosynthesis; L-leucine biosynthesis; L-leucine from 3-methyl-2-oxobutanoate: step 2/4. In terms of biological role, catalyzes the isomerization between 2-isopropylmalate and 3-isopropylmalate, via the formation of 2-isopropylmaleate. The polypeptide is 3-isopropylmalate dehydratase large subunit (Shigella flexneri serotype 5b (strain 8401)).